Reading from the N-terminus, the 566-residue chain is Arginine--tRNA ligase (566 aa).

Residues Ala-129 to His-139 carry the 'HIGH' region motif.

Belongs to the class-I aminoacyl-tRNA synthetase family. Monomer.

The protein resides in the cytoplasm. It carries out the reaction tRNA(Arg) + L-arginine + ATP = L-arginyl-tRNA(Arg) + AMP + diphosphate. This is Arginine--tRNA ligase from Wolbachia pipientis subsp. Culex pipiens (strain wPip).